Here is a 613-residue protein sequence, read N- to C-terminus: Phosphoinositide phospholipase C 6 (613 aa).

Residues 137–281 form the PI-PLC X-box domain; it reads QDMTAPLSHY…LLHRIIISTK (145 aa). Active-site residues include His-152 and His-198. A disordered region spans residues 288 to 349; it reads ESRNPIVKQK…ASEDQKPAYK (62 aa). Positions 349–465 constitute a PI-PLC Y-box domain; sequence KRLITIHAGK…GYVKKPNFLM (117 aa). The C2 domain maps to 466 to 595; that stretch reads KKGFHDEVFD…PGIRSVPLYD (130 aa).

It depends on Ca(2+) as a cofactor. As to expression, expressed in leaves, flowers and siliques, but not in roots.

It is found in the cell membrane. It carries out the reaction a 1,2-diacyl-sn-glycero-3-phospho-(1D-myo-inositol-4,5-bisphosphate) + H2O = 1D-myo-inositol 1,4,5-trisphosphate + a 1,2-diacyl-sn-glycerol + H(+). Its function is as follows. The production of the second messenger molecules diacylglycerol (DAG) and inositol 1,4,5-trisphosphate (IP3) is mediated by activated phosphatidylinositol-specific phospholipase C enzymes. This Arabidopsis thaliana (Mouse-ear cress) protein is Phosphoinositide phospholipase C 6 (PLC6).